A 514-amino-acid polypeptide reads, in one-letter code: 2,3-bisphosphoglycerate-independent phosphoglycerate mutase (514 aa).

Residues D13 and S63 each contribute to the Mn(2+) site. The active-site Phosphoserine intermediate is the S63. Substrate-binding positions include H124, 154–155, R186, R192, 258–261, and K332; these read RD and RADR. D399, H403, D440, H441, and H459 together coordinate Mn(2+).

Belongs to the BPG-independent phosphoglycerate mutase family. As to quaternary structure, monomer. The cofactor is Mn(2+).

It catalyses the reaction (2R)-2-phosphoglycerate = (2R)-3-phosphoglycerate. It functions in the pathway carbohydrate degradation; glycolysis; pyruvate from D-glyceraldehyde 3-phosphate: step 3/5. In terms of biological role, catalyzes the interconversion of 2-phosphoglycerate and 3-phosphoglycerate. The chain is 2,3-bisphosphoglycerate-independent phosphoglycerate mutase from Legionella pneumophila (strain Paris).